A 1796-amino-acid polypeptide reads, in one-letter code: MKVSDRRKFEKANFDEFESALNNKNDLVHCPSITLFESIPTEVRSFYEDEKSGLIKVVKFRTGAMDRKRSFEKIVISVMVGKNVQKFLTFVEDEPDFQGGPIPSKYLIPKKINLMVYTLFQVHTLKFNRKDYDTLSLFYLNRGYYNELSFRVLERCHEIASARPNDSSTMRTFTDFVSGAPIVRSLQKSTIRKYGYNLAPYMFLLLHVDELSIFSAYQASLPGEKKVDTERLKRDLCPRKPIEIKYFSQICNDMMNKKDRLGDILHIILRACALNFGAGPRGGAGDEEDRSITNEEPIIPSVDEHGLKVCKLRSPNTPRRLRKTLDAVKALLVSSCACTARDLDIFDDTNGVAMWKWIKILYHEVAQETTLKDSYRITLVPSSDGISVCGKLFNREYVRGFYFACKAQFDNLWGELNNCFYMPTVVDIASLILRNREVLFREPKRGIDEYLENDSFLQMIPVKYREIVLPKLRRDTNKMTAALKNKVTVAIDELTVPLMWMVHFAVGYPYRYPELQLLAFAGPQRNVYVDDTTRRIQLYTDYNKNGSSEPRLKTLDGLTSDYVFYFVTVLRQMQICALGNSYDAFNHDPWMDVVGFEDPDQVTNRDISRIVLYSYMFLNTAKGCLVEYATFRQYMRELPKNAPQKLNFREMRQGLIALGRHCVGSRFETDLYESATSELMANHSVQTGRNIYGVDSFSLTSVSGTTATLLQERASERWIQWLGLESDYHCSFSSTRNAEDVVAGEAASSDHDQKISRVTRKRPREPKSTNDILVAGQKLFGSSFEFRDLHQLRLCHEIYMADTPSVAVQAPPGYGKTELFHLPLIALASKGDVKYVSFLFVPYTVLLANCMIRLSRCGCLNVAPVRNFIEEGCDGVTDLYVGIYDDLASTNFTDRIAAWENIVECTFRTNNVKLGYLIVDEFHNFETEVYRQSQFGGITNLDFDAFEKAIFLSGTAPEAVADAALQRIGLTGLAKKSMDINELKRSEDLSRGLSSYPTRMFNLIKEKSEVPLGHVHKIWKKVESQPEEALKLLLALFEIEPESKAIVVASTTNEVEELACSWRKYFRVVWIHGKLGAAEKVSRTKEFVTDGSMRVLIGTKLVTEGIDIKQLMMVIMLDNRLNIIELIQGVGRLRDGGLCYLLSRKNSWAARNRKGELPPIKEGCITEQVREFYGLESKKGKKGQHVGCCGSRTDLSADTVELIERMDRLAEKQATASMSIIALPSSFQESNSSDRCRKYCSSDEDSDTCIHGSANASTNATTNSSTNATTTASTNVRTSATTTASINVRTSAITTESTNSSTNATTTASTNVRTSATTTASINVRTSATTTESTNSNTSATTTESTDSNTSATTTESTDSNTSATTTASTNSSTNATTTASTNSSTNATTTESTNASAKEDANKDGNAEDNRFHPVTDINKESYKRKGSQMVLLERKKLKAQFPNTSENMNVLQFLGFRSDEIKHLFLYGIDVYFCPEGVFTQYGLCKGCQKMFELCVCWAGQKVSYRRMAWEALAVERMLRNDEEYKEYLEDIEPYHGDPVGYLKYFSVKRGEIYSQIQRNYAWYLAITRRRETISVLDSTRGKQGSQVFRMSGRQIKELYYKVWSNLRESKTEVLQYFLNWDEKKCREEWEAKDDTVFVEALEKVGVFQRLRSMTSAGLQGPQYVKLQFSRHHRQLRSRYELSLGMHLRDQLALGVTPSKVPHWTAFLSMLIGLFYNKTFRQKLEYLLEQISEVWLLPHWLDLANVEVLAADNTRVPLYMLMVAVHKELDSDDVPDGRFDIILLCRDSSREVGE.

A disordered region spans residues 743–767 (AGEAASSDHDQKISRVTRKRPREPK). Residues 797–974 (EIYMADTPSV…LQRIGLTGLA (178 aa)) enclose the Helicase ATP-binding domain. ATP is bound at residue 810-817 (APPGYGKT). Positions 1031 to 1180 (KLLLALFEIE…EFYGLESKKG (150 aa)) constitute a Helicase C-terminal domain. 2 disordered regions span residues 1254 to 1278 (ANASTNATTNSSTNATTTASTNVRT) and 1294 to 1421 (TTES…DINK). Over residues 1294–1397 (TTESTNSSTN…ATTTESTNAS (104 aa)) the composition is skewed to low complexity. Residues 1398 to 1421 (AKEDANKDGNAEDNRFHPVTDINK) are compositionally biased toward basic and acidic residues.

Belongs to the helicase family. Yeast subtelomeric Y' repeat subfamily.

Catalyzes DNA unwinding and is involved in telomerase-independent telomere maintenance. This is Y' element ATP-dependent helicase protein 1 copy 5 (YRF1-5) from Saccharomyces cerevisiae (strain ATCC 204508 / S288c) (Baker's yeast).